The sequence spans 419 residues: Squamosa promoter-binding-like protein 2 (419 aa).

Residues 77–96 (SAEVRTHNFTSETGESLPGE) form a disordered region. An SBP-type zinc finger spans residues 166–243 (TPHCQVEGCN…SDHNARRRKP (78 aa)). Zn(2+)-binding residues include Cys-169, Cys-174, Cys-191, His-194, Cys-210, Cys-213, His-217, and Cys-229. Residues 226 to 242 (KRSCRRRLSDHNARRRK) carry the Bipartite nuclear localization signal motif. The disordered stretch occupies residues 230–249 (RRRLSDHNARRRKPNPGRTY).

It depends on Zn(2+) as a cofactor.

Its subcellular location is the nucleus. In terms of biological role, trans-acting factor that binds specifically to the consensus nucleotide sequence 5'-TNCGTACAA-3'. The sequence is that of Squamosa promoter-binding-like protein 2 (SPL2) from Arabidopsis thaliana (Mouse-ear cress).